The primary structure comprises 266 residues: Type II pantothenate kinase (266 aa).

6 to 13 (DAGGTLIK) provides a ligand contact to ATP. Glutamate 70 serves as the catalytic Proton acceptor. Residues threonine 99, 121 to 125 (GGMIQ), tyrosine 137, and serine 225 each bind ATP.

This sequence belongs to the type II pantothenate kinase family. In terms of assembly, homodimer.

The protein localises to the cytoplasm. The enzyme catalyses (R)-pantothenate + ATP = (R)-4'-phosphopantothenate + ADP + H(+). It participates in cofactor biosynthesis; coenzyme A biosynthesis; CoA from (R)-pantothenate: step 1/5. Functionally, catalyzes the phosphorylation of pantothenate (Pan), the first step in CoA biosynthesis. This Staphylococcus haemolyticus (strain JCSC1435) protein is Type II pantothenate kinase.